Consider the following 321-residue polypeptide: Glucokinase (321 aa).

8-13 (GDVGGT) contacts ATP.

The protein belongs to the bacterial glucokinase family.

The protein localises to the cytoplasm. The catalysed reaction is D-glucose + ATP = D-glucose 6-phosphate + ADP + H(+). The protein is Glucokinase of Enterobacter sp. (strain 638).